A 327-amino-acid polypeptide reads, in one-letter code: Gonadotropin-releasing hormone receptor (327 aa).

Residues 1–37 are Extracellular-facing; sequence MASASPEQNQNHCSAVNNSNMLMQGNLPTLTLSGKIR. Residue N17 is glycosylated (N-linked (GlcNAc...) asparagine). A helical transmembrane segment spans residues 38-57; it reads VTVTFFLFLLSTIFNASFLL. Over 58–76 the chain is Cytoplasmic; it reads KLQKWTQKKEKGKKLSRMK. The chain crosses the membrane as a helical span at residues 77–96; it reads VLLKHLTLANLLETLIVMPL. Topologically, residues 97-114 are extracellular; sequence DGMWNITVQWYAGEFLCK. An N-linked (GlcNAc...) asparagine glycan is attached at N101. A disulfide bridge connects residues C113 and C195. The helical transmembrane segment at 115 to 136 threads the bilayer; that stretch reads VLSYLKLFSMYAPAFMMVVISL. The Cytoplasmic portion of the chain corresponds to 137-163; the sequence is DRSLAITRPLAMKNNGKLGQSMIGLAW. Residues 164-183 traverse the membrane as a helical segment; it reads LLSGIFAGPQLYIFRMIHLA. Residues 184–211 are Extracellular-facing; that stretch reads DSSGQTEGFPQCVTHCSFPQWWHQAFYN. The helical transmembrane segment at 212 to 231 threads the bilayer; the sequence is FFTFSCLFIIPLFITLICNA. Residues 232–280 lie on the Cytoplasmic side of the membrane; it reads KIIFTLTRVLHQDPHELQLNQSKNNIPRARLRTLKMTVAFATSFTVCWT. A helical transmembrane segment spans residues 281 to 299; the sequence is PYYVLGIWYWFDPEMLNRV. Topologically, residues 300-305 are extracellular; sequence SDPVNH. The helical transmembrane segment at 306 to 325 threads the bilayer; the sequence is FFFLFALLNPCFDPLIYGYF. The Cytoplasmic portion of the chain corresponds to 326–327; the sequence is SL.

It belongs to the G-protein coupled receptor 1 family.

The protein localises to the cell membrane. In terms of biological role, receptor for gonadotropin releasing hormone (GnRH) that mediates the action of GnRH to stimulate the secretion of the gonadotropic hormones luteinizing hormone (LH) and follicle-stimulating hormone (FSH). This receptor mediates its action by association with G-proteins that activate a phosphatidylinositol-calcium second messenger system. The protein is Gonadotropin-releasing hormone receptor (GNRHR) of Canis lupus familiaris (Dog).